A 335-amino-acid chain; its full sequence is Trans-3-hydroxy-L-proline dehydratase (335 aa).

Cys91 acts as the Proton acceptor in catalysis. Substrate contacts are provided by residues 92-93 (GH), His222, and 256-257 (GS).

Belongs to the proline racemase family. In terms of assembly, homodimer.

The catalysed reaction is trans-3-hydroxy-L-proline = 1-pyrroline-2-carboxylate + H2O. Its function is as follows. Catalyzes the dehydration of trans-3-hydroxy-L-proline (t3LHyp) to Delta(1)-pyrroline-2-carboxylate (Pyr2C). Does not possess neither proline racemase nor 4-hydroxyproline 2-epimerase activities. The sequence is that of Trans-3-hydroxy-L-proline dehydratase from Burkholderia cenocepacia (strain HI2424).